The primary structure comprises 418 residues: MVDALDSKSSAFGHVGSSPTAPTAVMGTYKRFPVTLLRGKGCWVWDDHGHQYLDAVAGIATCALGHSDRALRRSLGQQLKQLQHVSNLYRIPEQEALAHWLVENSCADSVFFCNSGAEANEAAIKLARKHGHRRRGIDRPIILTANSSFHGRTLAAISATGQPNFHKGFEPMVEGFEFFPFNNLQAFEQQLNRLEAQGPSVAAVLIEPLQGEGGVNPGEAGFFRRLRELCSQHQILLIFDEVQVGMGRCGNWWGYQQLGIEPDAFTLAKGLGGGHAIGALLVKQHADLFEPGDHASTFGGNPFACKAALTVAKEIERRGLIAKVQQRGAQLREGLTDLVQRFPRQLKGVRGWGLLQGLVLQDESTFTAPNVAQAALEEKLLVIAAGPKVVRMVPPLIIKPSEIRQLLQRLEATLAHFR.

Residues 116 to 117 and F149 contribute to the pyridoxal 5'-phosphate site; that span reads GA. R152 provides a ligand contact to N(2)-acetyl-L-ornithine. 240–243 is a pyridoxal 5'-phosphate binding site; that stretch reads DEVQ. The residue at position 269 (K269) is an N6-(pyridoxal phosphate)lysine. A N(2)-acetyl-L-ornithine-binding site is contributed by S296. Residue T297 participates in pyridoxal 5'-phosphate binding.

It belongs to the class-III pyridoxal-phosphate-dependent aminotransferase family. ArgD subfamily. As to quaternary structure, homodimer. It depends on pyridoxal 5'-phosphate as a cofactor.

It localises to the cytoplasm. The enzyme catalyses N(2)-acetyl-L-ornithine + 2-oxoglutarate = N-acetyl-L-glutamate 5-semialdehyde + L-glutamate. The protein operates within amino-acid biosynthesis; L-arginine biosynthesis; N(2)-acetyl-L-ornithine from L-glutamate: step 4/4. This is Acetylornithine aminotransferase from Prochlorococcus marinus (strain MIT 9313).